Here is a 273-residue protein sequence, read N- to C-terminus: Type IV secretion system protein PtlF (273 aa).

The signal sequence occupies residues 1-20 (MMAARMMAAGLAATALSAHA).

It belongs to the TrbG/VirB9 family. Forms a complex with PtlI.

The protein resides in the cell outer membrane. Functionally, component of the type IV secretion system ptl required for secretion of assembled pertussis toxin (PTX) through the outer membrane. This is Type IV secretion system protein PtlF (ptlF) from Bordetella pertussis (strain Tohama I / ATCC BAA-589 / NCTC 13251).